A 508-amino-acid chain; its full sequence is tRNA(Ile2) 2-agmatinylcytidine synthetase TiaS (508 aa).

The segment at residues 367–427 (ITGGHVLIEL…YQLNIEKINV (61 aa)) is a DNA-binding region (OB).

Belongs to the TiaS family.

It is found in the cytoplasm. The catalysed reaction is cytidine(34) in tRNA(Ile2) + agmatine + ATP + H2O = 2-agmatinylcytidine(34) in tRNA(Ile2) + AMP + 2 phosphate + 2 H(+). Its function is as follows. ATP-dependent agmatine transferase that catalyzes the formation of 2-agmatinylcytidine (agm2C) at the wobble position (C34) of tRNA(Ile2), converting the codon specificity from AUG to AUA. This chain is tRNA(Ile2) 2-agmatinylcytidine synthetase TiaS, found in Methanococcus voltae (strain ATCC BAA-1334 / A3).